The sequence spans 302 residues: Sulfate adenylyltransferase subunit 2 (302 aa).

Residues 280-302 (RQGRLIDSDQSASMEQKKRQGYF) form a disordered region.

The protein belongs to the PAPS reductase family. CysD subfamily. In terms of assembly, heterodimer composed of CysD, the smaller subunit, and CysN.

The catalysed reaction is sulfate + ATP + H(+) = adenosine 5'-phosphosulfate + diphosphate. The protein operates within sulfur metabolism; hydrogen sulfide biosynthesis; sulfite from sulfate: step 1/3. Its function is as follows. With CysN forms the ATP sulfurylase (ATPS) that catalyzes the adenylation of sulfate producing adenosine 5'-phosphosulfate (APS) and diphosphate, the first enzymatic step in sulfur assimilation pathway. APS synthesis involves the formation of a high-energy phosphoric-sulfuric acid anhydride bond driven by GTP hydrolysis by CysN coupled to ATP hydrolysis by CysD. The protein is Sulfate adenylyltransferase subunit 2 of Shewanella baltica (strain OS223).